The sequence spans 271 residues: uncharacterized protein (271 aa).

Residues 24-124 (PIILLVHGGG…QVHVMIPHEP (101 aa)) enclose the AB hydrolase-1 domain.

This sequence belongs to the AB hydrolase superfamily.

This is an uncharacterized protein from Bacillus subtilis (strain 168).